The sequence spans 276 residues: Formamidopyrimidine-DNA glycosylase (276 aa).

Proline 2 serves as the catalytic Schiff-base intermediate with DNA. Catalysis depends on glutamate 3, which acts as the Proton donor. The Proton donor; for beta-elimination activity role is filled by lysine 58. 3 residues coordinate DNA: histidine 92, arginine 111, and lysine 154. Residues glutamine 239–valine 273 form an FPG-type zinc finger. The Proton donor; for delta-elimination activity role is filled by arginine 263.

It belongs to the FPG family. In terms of assembly, monomer. It depends on Zn(2+) as a cofactor.

It carries out the reaction Hydrolysis of DNA containing ring-opened 7-methylguanine residues, releasing 2,6-diamino-4-hydroxy-5-(N-methyl)formamidopyrimidine.. The catalysed reaction is 2'-deoxyribonucleotide-(2'-deoxyribose 5'-phosphate)-2'-deoxyribonucleotide-DNA = a 3'-end 2'-deoxyribonucleotide-(2,3-dehydro-2,3-deoxyribose 5'-phosphate)-DNA + a 5'-end 5'-phospho-2'-deoxyribonucleoside-DNA + H(+). Its function is as follows. Involved in base excision repair of DNA damaged by oxidation or by mutagenic agents. Acts as a DNA glycosylase that recognizes and removes damaged bases. Has a preference for oxidized purines, such as 7,8-dihydro-8-oxoguanine (8-oxoG). Has AP (apurinic/apyrimidinic) lyase activity and introduces nicks in the DNA strand. Cleaves the DNA backbone by beta-delta elimination to generate a single-strand break at the site of the removed base with both 3'- and 5'-phosphates. The protein is Formamidopyrimidine-DNA glycosylase of Lactobacillus acidophilus (strain ATCC 700396 / NCK56 / N2 / NCFM).